The primary structure comprises 598 residues: mRNA-capping enzyme (598 aa).

A TPase region spans residues 1–215 (MSQTGAPPRW…GSASAPASEP (215 aa)). Positions 25–183 (LPMKTMLGPR…FRRYGDVEDA (159 aa)) constitute a Tyrosine-protein phosphatase domain. Catalysis depends on Cys126, which acts as the Phosphocysteine intermediate. The disordered stretch occupies residues 186 to 227 (APPLPEWCFDEDEEEDGEEDGSASAPASEPSSSHTGQSKKKK). Residues 193–206 (CFDEDEEEDGEEDG) are compositionally biased toward acidic residues. The segment covering 207–218 (SASAPASEPSSS) has biased composition (low complexity). The segment at 233-598 (GAVFLEGVSV…PKRSANSIPQ (366 aa)) is GTase. The active-site N6-GMP-lysine intermediate is the Lys298. Residues Arg303, Arg319, 347-349 (DGE), 462-464 (KWK), and 532-537 (RQRVDK) contribute to the GTP site. Residues 575-598 (RKNPADSDLMPPPPPKRSANSIPQ) form a disordered region.

In the N-terminal section; belongs to the non-receptor class of the protein-tyrosine phosphatase family. It in the C-terminal section; belongs to the eukaryotic GTase family.

The protein localises to the nucleus. It carries out the reaction a 5'-end triphospho-ribonucleoside in mRNA + H2O = a 5'-end diphospho-ribonucleoside in mRNA + phosphate + H(+). The catalysed reaction is a 5'-end diphospho-ribonucleoside in mRNA + GTP + H(+) = a 5'-end (5'-triphosphoguanosine)-ribonucleoside in mRNA + diphosphate. In terms of biological role, bifunctional mRNA-capping enzyme exhibiting RNA 5'-triphosphate monophosphatase activity in the N-terminal part and mRNA guanylyltransferase activity in the C-terminal part. Catalyzes the first two steps of cap formation: by removing the gamma-phosphate from the 5'-triphosphate end of nascent mRNA to yield a diphosphate end, and by transferring the GMP moiety of GTP to the 5'-diphosphate terminus of RNA via a covalent enzyme-GMP reaction intermediate. The polypeptide is mRNA-capping enzyme (rngtt) (Danio rerio (Zebrafish)).